We begin with the raw amino-acid sequence, 418 residues long: Histidinol dehydrogenase (418 aa).

3 residues coordinate NAD(+): Tyr119, Gln180, and Asn203. Residues Thr226, Gln248, and His251 each contribute to the substrate site. Zn(2+) contacts are provided by Gln248 and His251. Residues Glu316 and His317 each act as proton acceptor in the active site. Substrate is bound by residues His317, Asp350, Glu404, and His409. Asp350 provides a ligand contact to Zn(2+). His409 serves as a coordination point for Zn(2+).

This sequence belongs to the histidinol dehydrogenase family. Zn(2+) serves as cofactor.

The enzyme catalyses L-histidinol + 2 NAD(+) + H2O = L-histidine + 2 NADH + 3 H(+). The protein operates within amino-acid biosynthesis; L-histidine biosynthesis; L-histidine from 5-phospho-alpha-D-ribose 1-diphosphate: step 9/9. In terms of biological role, catalyzes the sequential NAD-dependent oxidations of L-histidinol to L-histidinaldehyde and then to L-histidine. In Staphylococcus aureus (strain COL), this protein is Histidinol dehydrogenase.